Consider the following 328-residue polypeptide: Methionyl-tRNA formyltransferase (328 aa).

110 to 113 (SLLP) is a binding site for (6S)-5,6,7,8-tetrahydrofolate.

This sequence belongs to the Fmt family.

The enzyme catalyses L-methionyl-tRNA(fMet) + (6R)-10-formyltetrahydrofolate = N-formyl-L-methionyl-tRNA(fMet) + (6S)-5,6,7,8-tetrahydrofolate + H(+). Attaches a formyl group to the free amino group of methionyl-tRNA(fMet). The formyl group appears to play a dual role in the initiator identity of N-formylmethionyl-tRNA by promoting its recognition by IF2 and preventing the misappropriation of this tRNA by the elongation apparatus. This chain is Methionyl-tRNA formyltransferase, found in Prochlorococcus marinus (strain MIT 9312).